The primary structure comprises 207 residues: Lipid A acyltransferase PagP (207 aa).

The N-terminal stretch at 1-24 (MKFDLTAACTLSATLLVSSGTVFA) is a signal peptide. Residues His-79, Asp-122, and Ser-123 contribute to the active site.

Belongs to the lipid A palmitoyltransferase family. As to quaternary structure, homodimer.

It is found in the cell outer membrane. The catalysed reaction is a lipid A + a 1,2-diacyl-sn-glycero-3-phosphocholine = a hepta-acyl lipid A + a 2-acyl-sn-glycero-3-phosphocholine. It catalyses the reaction a lipid IVA + a 1,2-diacyl-sn-glycero-3-phosphocholine = a lipid IVB + a 2-acyl-sn-glycero-3-phosphocholine. The enzyme catalyses a lipid IIA + a 1,2-diacyl-sn-glycero-3-phosphocholine = a lipid IIB + a 2-acyl-sn-glycero-3-phosphocholine. Transfers a fatty acid residue from the sn-1 position of a phospholipid to the N-linked hydroxyfatty acid chain on the proximal unit of lipid A or its precursors. The sequence is that of Lipid A acyltransferase PagP from Photorhabdus laumondii subsp. laumondii (strain DSM 15139 / CIP 105565 / TT01) (Photorhabdus luminescens subsp. laumondii).